We begin with the raw amino-acid sequence, 239 residues long: UPF0641 membrane protein YHR140W (239 aa).

Over 1–11 (MMSCLVPTRFT) the chain is Cytoplasmic. Residues 12 to 31 (LTLNTACLLTSTWGFVRATS) traverse the membrane as a helical segment. The Lumenal portion of the chain corresponds to 32–45 (VVLPPSLSKAGHKQ). The helical transmembrane segment at 46–66 (FLTIISIIATIINNAVNISNY) threads the bilayer. Topologically, residues 67–99 (YIQRNNKMNLETKKKSDFISRHVTLPVSLVLES) are cytoplasmic. A helical transmembrane segment spans residues 100–120 (IVATVYWPLRLFFVNLIMHGV). Residues 121–125 (ESTAK) lie on the Lumenal side of the membrane. The chain crosses the membrane as a helical span at residues 126 to 146 (TPFPMTVDMAIHLYPILYLLA). Over 147 to 162 (DHYLSGSGTKFKLSNK) the chain is Cytoplasmic. The helical transmembrane segment at 163-183 (HAWLIVTSLAFSYFQYLAFLI) threads the bilayer. Residues 184–204 (DAGQGQAYPYPFLDVNEPYKS) lie on the Lumenal side of the membrane. The helical transmembrane segment at 205–225 (IIFVVVATITWAYYVFYQKFP) threads the bilayer. Topologically, residues 226-239 (PKYIKKSAKKGDKN) are cytoplasmic.

This sequence belongs to the UPF0641 family.

The protein resides in the endoplasmic reticulum membrane. In Saccharomyces cerevisiae (strain ATCC 204508 / S288c) (Baker's yeast), this protein is UPF0641 membrane protein YHR140W.